Here is a 321-residue protein sequence, read N- to C-terminus: Mitochondrial coenzyme A transporter SLC25A42 (321 aa).

Solcar repeat units lie at residues 33–119, 131–216, and 226–314; these read RSVL…YKGI, LPPV…LKKT, and PFPY…TQIL. Helical transmembrane passes span 35–55, 91–111, 137–154, 191–208, 232–252, and 295–315; these read VLNS…AVAP, LWRG…IQFC, LLAG…TYPL, GFTP…LSFF, LVFG…LDVV, and VKGP…QILL.

It belongs to the mitochondrial carrier (TC 2.A.29) family.

The protein resides in the mitochondrion inner membrane. The enzyme catalyses ADP(out) + CoA(in) = ADP(in) + CoA(out). It carries out the reaction 3'-dephospho-CoA(in) + ADP(out) = 3'-dephospho-CoA(out) + ADP(in). It catalyses the reaction adenosine 3',5'-bisphosphate(in) + ADP(out) = adenosine 3',5'-bisphosphate(out) + ADP(in). The catalysed reaction is AMP(in) + ADP(out) = AMP(out) + ADP(in). The enzyme catalyses dADP(in) + ADP(out) = dADP(out) + ADP(in). It carries out the reaction ADP(in) + ATP(out) = ADP(out) + ATP(in). Functionally, mitochondrial carrier mediating the transport of coenzyme A (CoA) in mitochondria in exchange for intramitochondrial (deoxy)adenine nucleotides and adenosine 3',5'-diphosphate. The chain is Mitochondrial coenzyme A transporter SLC25A42 (slc25a42) from Danio rerio (Zebrafish).